A 339-amino-acid chain; its full sequence is Phosphate acyltransferase (339 aa).

This sequence belongs to the PlsX family. As to quaternary structure, homodimer. Probably interacts with PlsY.

It localises to the cytoplasm. The catalysed reaction is a fatty acyl-[ACP] + phosphate = an acyl phosphate + holo-[ACP]. The protein operates within lipid metabolism; phospholipid metabolism. Its function is as follows. Catalyzes the reversible formation of acyl-phosphate (acyl-PO(4)) from acyl-[acyl-carrier-protein] (acyl-ACP). This enzyme utilizes acyl-ACP as fatty acyl donor, but not acyl-CoA. In Tolumonas auensis (strain DSM 9187 / NBRC 110442 / TA 4), this protein is Phosphate acyltransferase.